A 154-amino-acid chain; its full sequence is Myoglobin (154 aa).

The Globin domain maps to 2–148 (GLSDGEWQLV…FRNDMAAKYK (147 aa)). The residue at position 4 (Ser4) is a Phosphoserine. Position 65 (His65) interacts with nitrite. His65 contributes to the O2 binding site. Phosphothreonine is present on Thr68. His94 contacts heme b.

Belongs to the globin family. In terms of assembly, monomeric.

It is found in the cytoplasm. The protein resides in the sarcoplasm. It carries out the reaction Fe(III)-heme b-[protein] + nitric oxide + H2O = Fe(II)-heme b-[protein] + nitrite + 2 H(+). The enzyme catalyses H2O2 + AH2 = A + 2 H2O. Monomeric heme protein which primary function is to store oxygen and facilitate its diffusion within muscle tissues. Reversibly binds oxygen through a pentacoordinated heme iron and enables its timely and efficient release as needed during periods of heightened demand. Depending on the oxidative conditions of tissues and cells, and in addition to its ability to bind oxygen, it also has a nitrite reductase activity whereby it regulates the production of bioactive nitric oxide. Under stress conditions, like hypoxia and anoxia, it also protects cells against reactive oxygen species thanks to its pseudoperoxidase activity. The chain is Myoglobin (MB) from Sapajus apella (Brown-capped capuchin).